The primary structure comprises 364 residues: Membrane-bound lytic murein transglycosylase C (364 aa).

A signal peptide spans 1-19 (MNKYKKFLPLLVLIPFLAS). C20 is lipidated: N-palmitoyl cysteine. Residue C20 is the site of S-diacylglycerol cysteine attachment.

Belongs to the transglycosylase Slt family.

The protein resides in the cell outer membrane. It carries out the reaction Exolytic cleavage of the (1-&gt;4)-beta-glycosidic linkage between N-acetylmuramic acid (MurNAc) and N-acetylglucosamine (GlcNAc) residues in peptidoglycan, from either the reducing or the non-reducing ends of the peptidoglycan chains, with concomitant formation of a 1,6-anhydrobond in the MurNAc residue.. Its function is as follows. Murein-degrading enzyme. May play a role in recycling of muropeptides during cell elongation and/or cell division. The protein is Membrane-bound lytic murein transglycosylase C of Glaesserella parasuis serovar 5 (strain SH0165) (Haemophilus parasuis).